Reading from the N-terminus, the 227-residue chain is Cytochrome c oxidase subunit 2 (227 aa).

The Mitochondrial intermembrane segment spans residues 1 to 14; the sequence is MAYSFQLGLQDATS. The helical transmembrane segment at 15–45 threads the bilayer; sequence PIMEELMNFHDHTLMIVFLISSLVLYIISLM. The Mitochondrial matrix segment spans residues 46–59; it reads LTTKLTHTSTMDAQ. Residues 60–87 form a helical membrane-spanning segment; it reads EVETIWTILPAVILIMIALPSLRILYMM. Residues 88-227 lie on the Mitochondrial intermembrane side of the membrane; that stretch reads DEINNPVLTV…HFENWSASMI (140 aa). Residues His-161, Cys-196, Glu-198, Cys-200, His-204, and Met-207 each coordinate Cu cation. Glu-198 is a binding site for Mg(2+).

Belongs to the cytochrome c oxidase subunit 2 family. In terms of assembly, component of the cytochrome c oxidase (complex IV, CIV), a multisubunit enzyme composed of 14 subunits. The complex is composed of a catalytic core of 3 subunits MT-CO1, MT-CO2 and MT-CO3, encoded in the mitochondrial DNA, and 11 supernumerary subunits COX4I, COX5A, COX5B, COX6A, COX6B, COX6C, COX7A, COX7B, COX7C, COX8 and NDUFA4, which are encoded in the nuclear genome. The complex exists as a monomer or a dimer and forms supercomplexes (SCs) in the inner mitochondrial membrane with NADH-ubiquinone oxidoreductase (complex I, CI) and ubiquinol-cytochrome c oxidoreductase (cytochrome b-c1 complex, complex III, CIII), resulting in different assemblies (supercomplex SCI(1)III(2)IV(1) and megacomplex MCI(2)III(2)IV(2)). Found in a complex with TMEM177, COA6, COX18, COX20, SCO1 and SCO2. Interacts with TMEM177 in a COX20-dependent manner. Interacts with COX20. Interacts with COX16. Cu cation is required as a cofactor.

Its subcellular location is the mitochondrion inner membrane. It carries out the reaction 4 Fe(II)-[cytochrome c] + O2 + 8 H(+)(in) = 4 Fe(III)-[cytochrome c] + 2 H2O + 4 H(+)(out). Its function is as follows. Component of the cytochrome c oxidase, the last enzyme in the mitochondrial electron transport chain which drives oxidative phosphorylation. The respiratory chain contains 3 multisubunit complexes succinate dehydrogenase (complex II, CII), ubiquinol-cytochrome c oxidoreductase (cytochrome b-c1 complex, complex III, CIII) and cytochrome c oxidase (complex IV, CIV), that cooperate to transfer electrons derived from NADH and succinate to molecular oxygen, creating an electrochemical gradient over the inner membrane that drives transmembrane transport and the ATP synthase. Cytochrome c oxidase is the component of the respiratory chain that catalyzes the reduction of oxygen to water. Electrons originating from reduced cytochrome c in the intermembrane space (IMS) are transferred via the dinuclear copper A center (CU(A)) of subunit 2 and heme A of subunit 1 to the active site in subunit 1, a binuclear center (BNC) formed by heme A3 and copper B (CU(B)). The BNC reduces molecular oxygen to 2 water molecules using 4 electrons from cytochrome c in the IMS and 4 protons from the mitochondrial matrix. The polypeptide is Cytochrome c oxidase subunit 2 (MT-CO2) (Praomys jacksoni (African forest rat)).